The sequence spans 501 residues: METRELWVLAAALAVSLLYYLAALMRYAGGGCSRSSRPPLPPGPTPLPLIGNLLSLRGVLHHRLASLARVHGPVMALRLGLTTAVVVSSRDAAAEAFTKHDRRLAARVVPDSNRAHGFSDRSIIWLPSSDPRWKALRGIQATHLFSPRGLAAVRSVRESKVRDIVAYFRSRAGEEVVFGEAIYSGVLNLVSSSFFSVNMAGVGSEEAHGLRELVEDLVEAIAKPNVSDLFPFLRQLDLQGLRRRTEERMARAFGILDGIIDRRLANRTHGDRHGDFLDALLDLVSEGKMARDHVTIMLFEVFGAGSDTMSVSLEWAMAELLRNPRAMRKARAELEDAAAVVEESDAARLPYLQAVVKEAMRLHPVGPILLPHRAVEDGVEIGGYAVPRGAMVIFNAWAIMRDPAAWERPDEFVPERFMETTTAIDFRGKEYEYLPFGSGRRLCPGLPLAERVVPFVLASLLRAFEWRLPDGVSAEDLDVSERFNTANVLAVPLKVVPVIVN.

A helical membrane pass occupies residues Glu-5–Met-25. Position 443 (Cys-443) interacts with heme.

This sequence belongs to the cytochrome P450 family. It depends on heme as a cofactor.

Its subcellular location is the membrane. It catalyses the reaction ent-sandaracopimaradien-3beta-ol + reduced [NADPH--hemoprotein reductase] + O2 = oryzalexin E + oxidized [NADPH--hemoprotein reductase] + H2O + H(+). Functionally, enzyme of the diterpenoid metabolism involved in the biosynthesis of the oryzalexin class of phytoalexins. Hydroxylates ent-sandaracopimaradien. This Oryza sativa subsp. japonica (Rice) protein is Cytochrome P450 76M5.